We begin with the raw amino-acid sequence, 172 residues long: Shikimate kinase 2 (172 aa).

Gly-9 to Thr-16 is a binding site for ATP.

Belongs to the shikimate kinase family.

It is found in the cytoplasm. It catalyses the reaction shikimate + ATP = 3-phosphoshikimate + ADP + H(+). The protein operates within metabolic intermediate biosynthesis; chorismate biosynthesis; chorismate from D-erythrose 4-phosphate and phosphoenolpyruvate: step 5/7. The polypeptide is Shikimate kinase 2 (Syntrophotalea carbinolica (strain DSM 2380 / NBRC 103641 / GraBd1) (Pelobacter carbinolicus)).